The sequence spans 335 residues: Fructose-1,6-bisphosphatase class 1 (335 aa).

Residues Glu94, Asp113, Leu115, and Asp116 each contribute to the Mg(2+) site. Residues 116 to 119, Asn208, and Lys274 contribute to the substrate site; that span reads DGSS. Glu280 contributes to the Mg(2+) binding site.

The protein belongs to the FBPase class 1 family. In terms of assembly, homotetramer. Mg(2+) serves as cofactor.

It localises to the cytoplasm. It carries out the reaction beta-D-fructose 1,6-bisphosphate + H2O = beta-D-fructose 6-phosphate + phosphate. It participates in carbohydrate biosynthesis; gluconeogenesis. The polypeptide is Fructose-1,6-bisphosphatase class 1 (Polynucleobacter asymbioticus (strain DSM 18221 / CIP 109841 / QLW-P1DMWA-1) (Polynucleobacter necessarius subsp. asymbioticus)).